The sequence spans 311 residues: Ribonuclease Z (311 aa).

Zn(2+) contacts are provided by His-61, His-63, Asp-65, His-66, His-139, Asp-210, and His-268. Asp-65 functions as the Proton acceptor in the catalytic mechanism.

The protein belongs to the RNase Z family. In terms of assembly, homodimer. Zn(2+) serves as cofactor.

It carries out the reaction Endonucleolytic cleavage of RNA, removing extra 3' nucleotides from tRNA precursor, generating 3' termini of tRNAs. A 3'-hydroxy group is left at the tRNA terminus and a 5'-phosphoryl group is left at the trailer molecule.. Functionally, zinc phosphodiesterase, which displays some tRNA 3'-processing endonuclease activity. Probably involved in tRNA maturation, by removing a 3'-trailer from precursor tRNA. This chain is Ribonuclease Z, found in Haloarcula marismortui (strain ATCC 43049 / DSM 3752 / JCM 8966 / VKM B-1809) (Halobacterium marismortui).